The following is a 303-amino-acid chain: Ribonuclease Z (303 aa).

Positions 61, 63, 65, 66, 138, 206, and 265 each coordinate Zn(2+). Residue Asp-65 is the Proton acceptor of the active site.

The protein belongs to the RNase Z family. Homodimer. Zn(2+) serves as cofactor.

It catalyses the reaction Endonucleolytic cleavage of RNA, removing extra 3' nucleotides from tRNA precursor, generating 3' termini of tRNAs. A 3'-hydroxy group is left at the tRNA terminus and a 5'-phosphoryl group is left at the trailer molecule.. Its function is as follows. Zinc phosphodiesterase, which displays some tRNA 3'-processing endonuclease activity. Probably involved in tRNA maturation, by removing a 3'-trailer from precursor tRNA. The sequence is that of Ribonuclease Z from Agathobacter rectalis (strain ATCC 33656 / DSM 3377 / JCM 17463 / KCTC 5835 / VPI 0990) (Eubacterium rectale).